The sequence spans 309 residues: GTP cyclohydrolase FolE2 (309 aa).

Belongs to the GTP cyclohydrolase IV family.

It carries out the reaction GTP + H2O = 7,8-dihydroneopterin 3'-triphosphate + formate + H(+). Its pathway is cofactor biosynthesis; 7,8-dihydroneopterin triphosphate biosynthesis; 7,8-dihydroneopterin triphosphate from GTP: step 1/1. Its function is as follows. Converts GTP to 7,8-dihydroneopterin triphosphate. The chain is GTP cyclohydrolase FolE2 from Serratia proteamaculans (strain 568).